The primary structure comprises 775 residues: Serine/threonine-protein kinase-like protein CCR1 (775 aa).

Positions 1–23 (METRCSLLFLSLILLYLPKPGSG) are cleaved as a signal peptide. Topologically, residues 24 to 439 (FGSSGPIAAS…DKHWHQLQRL (416 aa)) are extracellular. N-linked (GlcNAc...) asparagine glycans are attached at residues N57, N102, N167, N213, N220, N241, N261, N292, N328, and N360. The stretch at 351-406 (PCNEKEFAFNASILNEPDLTSLCVRKELMVCSPCGSDCSHGFFLSSSCTANSDRIC) is one TNFR-Cys repeat. 3 disulfides stabilise this stretch: C352/C381, C384/C398, and C388/C406. An N-linked (GlcNAc...) asparagine glycan is attached at N414. Residues 440–460 (VLIIGSCASALLIIIIGCCVV) form a helical membrane-spanning segment. Residues 461-775 (PRIVTSPNKE…EHVARDALIF (315 aa)) are Cytoplasmic-facing. One can recognise a Protein kinase domain in the interval 520 to 770 (FKEFNELGRG…LANWLEHVAR (251 aa)). Residues 526–534 (LGRGSYGFV) and K548 each bind ATP. The active-site Proton acceptor is the D645.

Belongs to the protein kinase superfamily. Ser/Thr protein kinase family. In terms of assembly, homodimer. As to expression, expressed in roots, leaves, shoot apical meristems (SAM), and floral buds.

The protein resides in the membrane. The enzyme catalyses L-seryl-[protein] + ATP = O-phospho-L-seryl-[protein] + ADP + H(+). The catalysed reaction is L-threonyl-[protein] + ATP = O-phospho-L-threonyl-[protein] + ADP + H(+). Functionally, serine/threonine-protein kinase with low activity. The sequence is that of Serine/threonine-protein kinase-like protein CCR1 (CCR1) from Arabidopsis thaliana (Mouse-ear cress).